We begin with the raw amino-acid sequence, 146 residues long: Hemoglobin subunit beta (146 aa).

At Val-1 the chain carries N-acetylvaline. Residues 2–146 enclose the Globin domain; sequence HLTAAEKSAI…VANALAHKYH (145 aa). His-63 is a binding site for heme b. Lys-82 is subject to N6-acetyllysine. His-92 serves as a coordination point for heme b. Residue Cys-93 is modified to S-nitrosocysteine. Lys-144 carries the post-translational modification N6-acetyllysine.

This sequence belongs to the globin family. In terms of assembly, heterotetramer of two alpha chains and two beta chains. In terms of tissue distribution, red blood cells.

Involved in oxygen transport from the lung to the various peripheral tissues. In Cavia porcellus (Guinea pig), this protein is Hemoglobin subunit beta (HBB).